Consider the following 390-residue polypeptide: Chalcone synthase (390 aa).

Residue C164 is part of the active site.

The protein belongs to the thiolase-like superfamily. Chalcone/stilbene synthases family.

The catalysed reaction is (E)-4-coumaroyl-CoA + 3 malonyl-CoA + 3 H(+) = 2',4,4',6'-tetrahydroxychalcone + 3 CO2 + 4 CoA. It participates in secondary metabolite biosynthesis; flavonoid biosynthesis. In terms of biological role, the primary product of this enzyme is 4,2',4',6'-tetrahydroxychalcone (also termed naringenin-chalcone or chalcone) which can under specific conditions spontaneously isomerize into naringenin. The polypeptide is Chalcone synthase (CHS) (Onobrychis viciifolia (Common sainfoin)).